The primary structure comprises 73 residues: Translation initiation factor IF-1 (73 aa).

Residues 1–73 (MANKEELIEF…SKGRITYRAR (73 aa)) form the S1-like domain.

It belongs to the IF-1 family. In terms of assembly, component of the 30S ribosomal translation pre-initiation complex which assembles on the 30S ribosome in the order IF-2 and IF-3, IF-1 and N-formylmethionyl-tRNA(fMet); mRNA recruitment can occur at any time during PIC assembly.

The protein resides in the cytoplasm. Its function is as follows. One of the essential components for the initiation of protein synthesis. Stabilizes the binding of IF-2 and IF-3 on the 30S subunit to which N-formylmethionyl-tRNA(fMet) subsequently binds. Helps modulate mRNA selection, yielding the 30S pre-initiation complex (PIC). Upon addition of the 50S ribosomal subunit IF-1, IF-2 and IF-3 are released leaving the mature 70S translation initiation complex. The protein is Translation initiation factor IF-1 of Acinetobacter baylyi (strain ATCC 33305 / BD413 / ADP1).